Reading from the N-terminus, the 259-residue chain is Polycomb group RING finger protein 1 (259 aa).

Residue A2 is modified to N-acetylalanine. S3 is subject to Phosphoserine. A Glycyl lysine isopeptide (Lys-Gly) (interchain with G-Cter in SUMO2) cross-link involves residue K24. Residues C47–N86 form an RING-type zinc finger. A necessary for repressor activity region spans residues N86–P247. Residue K88 forms a Glycyl lysine isopeptide (Lys-Gly) (interchain with G-Cter in SUMO2) linkage. The segment at L150–K255 is required for the interaction with the KDM2B-SKP1 heterodimeric complex. The interval E167–K255 is RING-finger and WD40-associated ubiquitin-like domain (RAWUL); sufficient for interaction with BCOR and BCORL1.

As to quaternary structure, interacts with BCORL1, forming heterodimers. The PCGF1-BCORL1 heterodimeric complex interacts with the KDM2B-SKP1 heterodimeric complex to form a homotetrameric polycomb repression complex 1 (PRC1.1). Component of the repressive BCOR complex containing a Polycomb group subcomplex at least composed of RYBP, RING1 and RNF2/RING2. Specifically interacts with BCOR, RING1 and RNF2/RING2. Component of a PRC1-like complex. Interacts with CBX6, CBX7 and CBX8. Interacts with DPPA4, NANOG, POU5F1 and RYBP.

It is found in the nucleus. Its function is as follows. Component of the Polycomb group (PcG) multiprotein BCOR complex, a complex required to maintain the transcriptionally repressive state of some genes, such as BCL6 and the cyclin-dependent kinase inhibitor, CDKN1A. Transcriptional repressor that may be targeted to the DNA by BCL6; this transcription repressor activity may be related to PKC signaling pathway. Represses CDKN1A expression by binding to its promoter, and this repression is dependent on the retinoic acid response element (RARE element). Promotes cell cycle progression and enhances cell proliferation as well. May have a positive role in tumor cell growth by down-regulating CDKN1A. Component of a Polycomb group (PcG) multiprotein PRC1-like complex, a complex class required to maintain the transcriptionally repressive state of many genes, including Hox genes, throughout development. PcG PRC1 complex acts via chromatin remodeling and modification of histones; it mediates monoubiquitination of histone H2A 'Lys-119', rendering chromatin heritably changed in its expressibility. Within the PRC1-like complex, regulates RNF2 ubiquitin ligase activity. Regulates the expression of DPPA4 and NANOG in the NT2 embryonic carcinoma cells. This chain is Polycomb group RING finger protein 1 (Pcgf1), found in Mus musculus (Mouse).